A 98-amino-acid chain; its full sequence is Putative pterin-4-alpha-carbinolamine dehydratase (98 aa).

This sequence belongs to the pterin-4-alpha-carbinolamine dehydratase family.

It carries out the reaction (4aS,6R)-4a-hydroxy-L-erythro-5,6,7,8-tetrahydrobiopterin = (6R)-L-erythro-6,7-dihydrobiopterin + H2O. This is Putative pterin-4-alpha-carbinolamine dehydratase from Chelativorans sp. (strain BNC1).